We begin with the raw amino-acid sequence, 309 residues long: Fructosamine-3-kinase (309 aa).

The residue at position 1 (M1) is an N-acetylmethionine. 89 to 91 (EHL) serves as a coordination point for ATP. The active-site Proton acceptor is the D217.

Belongs to the fructosamine kinase family. As to quaternary structure, monomer. As to expression, widely expressed. Expressed in erythrocytes.

The enzyme catalyses N(6)-(D-fructosyl)-L-lysyl-[protein] + ATP = N(6)-(3-O-phospho-D-fructosyl)-L-lysyl-[protein] + ADP + H(+). It catalyses the reaction N(6)-D-ribulosyl-L-lysyl-[protein] + ATP = N(6)-(3-O-phospho-D-ribulosyl)-L-lysyl-[protein] + ADP + H(+). It carries out the reaction N(6)-(D-psicosyl)-L-lysyl-[protein] + ATP = N(6)-(3-O-phospho-D-psicosyl)-L-lysyl-[protein] + ADP + H(+). Functionally, fructosamine-3-kinase involved in protein deglycation by mediating phosphorylation of fructoselysine residues on glycated proteins, to generate fructoselysine-3 phosphate. Fructoselysine-3 phosphate adducts are unstable and decompose under physiological conditions. Involved in intracellular deglycation in erythrocytes. Involved in the response to oxidative stress by mediating deglycation of NFE2L2/NRF2, glycation impairing NFE2L2/NRF2 function. Also able to phosphorylate psicosamines and ribulosamines. The polypeptide is Fructosamine-3-kinase (Homo sapiens (Human)).